The chain runs to 449 residues: Tubulin alpha chain (449 aa).

Gln-11, Glu-71, Ser-140, Gly-144, Thr-145, Thr-179, Asn-206, and Asn-228 together coordinate GTP. Glu-71 contacts Mg(2+). The active site involves Glu-254.

This sequence belongs to the tubulin family. As to quaternary structure, dimer of alpha and beta chains. A typical microtubule is a hollow water-filled tube with an outer diameter of 25 nm and an inner diameter of 15 nM. Alpha-beta heterodimers associate head-to-tail to form protofilaments running lengthwise along the microtubule wall with the beta-tubulin subunit facing the microtubule plus end conferring a structural polarity. Microtubules usually have 13 protofilaments but different protofilament numbers can be found in some organisms and specialized cells. Mg(2+) serves as cofactor.

The protein resides in the cytoplasm. It localises to the cytoskeleton. It catalyses the reaction GTP + H2O = GDP + phosphate + H(+). Its function is as follows. Tubulin is the major constituent of microtubules, a cylinder consisting of laterally associated linear protofilaments composed of alpha- and beta-tubulin heterodimers. Microtubules grow by the addition of GTP-tubulin dimers to the microtubule end, where a stabilizing cap forms. Below the cap, tubulin dimers are in GDP-bound state, owing to GTPase activity of alpha-tubulin. This chain is Tubulin alpha chain (TUB1), found in Pneumocystis carinii.